A 327-amino-acid polypeptide reads, in one-letter code: Cysteine synthase (327 aa).

The residue at position 65 (K65) is an N6-(pyridoxal phosphate)lysine. Residues N95, 200-204, and S282 each bind pyridoxal 5'-phosphate; that span reads GTGGT.

It belongs to the cysteine synthase/cystathionine beta-synthase family. Pyridoxal 5'-phosphate serves as cofactor.

The catalysed reaction is O-acetyl-L-serine + hydrogen sulfide = L-cysteine + acetate. It functions in the pathway amino-acid biosynthesis; L-cysteine biosynthesis; L-cysteine from L-serine: step 2/2. The protein is Cysteine synthase (cysM) of Aquifex aeolicus (strain VF5).